Here is a 496-residue protein sequence, read N- to C-terminus: Protein TOO MANY MOUTHS (496 aa).

The N-terminal stretch at 1–23 (MARYEFFRQIFIVLSIVSPLVRS) is a signal peptide. Residues 24-473 (FTVITSDSTA…ATDVSSTSKS (450 aa)) are Extracellular-facing. 10 LRR repeats span residues 158 to 182 (GSSLQTLVLRENGFLGPIPDELGNL), 183 to 208 (TNLKVLDLHKNHLNGSIPLSFNRFSG), 210 to 228 (RSLDLSGNRLTGSIPGFVL), 229 to 252 (PALSVLDLNQNLLTGPVPPTLTSC), 254 to 276 (SLIKIDLSRNRVTGPIPESINRL), 277 to 300 (NQLVLLDLSYNRLSGPFPSSLQGL), 302 to 325 (SLQALMLKGNTKFSTTIPENAFKG), 326 to 350 (LKNLMILVLSNTNIQGSIPKSLTRL), 351 to 373 (NSLRVLHLEGNNLTGEIPLEFRD), and 375 to 401 (KHLSELRLNDNSLTGPVPFERDTVWRM). N-linked (GlcNAc...) asparagine glycosylation is found at Asn-181 and Asn-196. An N-linked (GlcNAc...) asparagine glycan is attached at Asn-362. A disordered region spans residues 438–464 (AETSRPAPSGTVQHLSREEDGALPDGA). The helical transmembrane segment at 474–494 (LGFSYLSAFFLVFPNFIFMLI) threads the bilayer. Topologically, residues 495–496 (SS) are cytoplasmic.

It belongs to the RLP family. As to quaternary structure, forms heterodimer with ERECTA or ERL1 through their extracellular domains. Not able to form homodimer. Interacts with EPF2 but not with EPF1. Interacts with SERK1, SERK2, SERK3/BAK1 and SERK4. Interacts with EPFL9/STOMAGEN. As to expression, in epidermal cells of developing shoots and leaves, but not in roots. Expressed in the stomatal cell lineage in the developing epidermis. Accumulates strongly in meristemoid mother cells (MMC) and meristemoids, somewhat less in meristemoid sister cells (stomatal-lineage ground cells, SLGC), and is barely detected in pavement cells.

It localises to the cell membrane. Functionally, promotes cell fate progression in stomatal development. In leaves, needed to correctly orient spacing divisions, to limit the number of asymmetric divisions in neighbor cells, and to promote the asymmetric (amplifying) divisions of meristemoids. In stems, promotes the conversion of meristemoids into guard mother cells (GMC). Positively regulates CAPRICE (CPC) expression in differentiating stomaless-forming cell files. Forms constitutive complexes with ERECTA and ERL1 involved in the recognition of the stomatal regulatory peptides EPF1, EPF2 and EPFL9/STOMAGEN. Modulates the activity of the ligand-receptor pairs EPF2-ERECTA and EPF1-ERL1 in stomatal development. Functions in a combinatorial specific manner with the ERECTA-family (ERf) receptor kinases in the regulation of the immune response. This chain is Protein TOO MANY MOUTHS, found in Arabidopsis thaliana (Mouse-ear cress).